We begin with the raw amino-acid sequence, 527 residues long: BTB/POZ domain-containing protein At4g01160 (527 aa).

Positions 111–180 constitute a BTB domain; the sequence is NNNTSVLSVQ…MYSNSLSVTA (70 aa). Residues 233-327 enclose the BACK domain; the sequence is VKPLTNAARQ…HMTTDRLKKI (95 aa).

Its pathway is protein modification; protein ubiquitination. Its function is as follows. May act as a substrate-specific adapter of an E3 ubiquitin-protein ligase complex (CUL3-RBX1-BTB) which mediates the ubiquitination and subsequent proteasomal degradation of target proteins. The polypeptide is BTB/POZ domain-containing protein At4g01160 (Arabidopsis thaliana (Mouse-ear cress)).